Consider the following 85-residue polypeptide: YcgL domain-containing protein ECA2367 (85 aa).

The YcgL domain occupies 1 to 85 (MFCVIYRSVK…PVESLLTTPV (85 aa)).

This chain is YcgL domain-containing protein ECA2367, found in Pectobacterium atrosepticum (strain SCRI 1043 / ATCC BAA-672) (Erwinia carotovora subsp. atroseptica).